A 756-amino-acid polypeptide reads, in one-letter code: Probable chemoreceptor y4sI (756 aa).

2 consecutive transmembrane segments (helical) span residues 26 to 46 and 330 to 350; these read VCVA…TSVA and LIKI…MAIL. HAMP domains lie at 353–406 and 434–486; these read RSIS…ARVA and DEQA…ETIR. The region spanning 491–720 is the Methyl-accepting transducer domain; that stretch reads QAASMSSIVS…ESDAACRSLN (230 aa). Positions 736–756 are disordered; it reads GGGSSTRQPQSPPTQRYFMSR.

This sequence belongs to the methyl-accepting chemotaxis (MCP) protein family.

Its subcellular location is the cell membrane. In terms of biological role, chemotactic-signal transducers respond to changes in the concentration of attractants and repellents in the environment, transduce a signal from the outside to the inside of the cell, and facilitate sensory adaptation through the variation of the level of methylation. Attractants increase the level of methylation while repellents decrease the level of methylation. This chain is Probable chemoreceptor y4sI, found in Sinorhizobium fredii (strain NBRC 101917 / NGR234).